The sequence spans 531 residues: Coiled-coil domain-containing protein 9 (531 aa).

The segment at 40–531 is disordered; the sequence is EDRKKAELEG…PGEAWPFESV (492 aa). The span at 59–72 shows a compositional bias: basic and acidic residues; the sequence is RSVEKENVAVESEK. Residue Ser-80 is modified to Phosphoserine. Residue Thr-95 is modified to Phosphothreonine. Arg-107 carries the omega-N-methylarginine modification. Ser-111 carries the phosphoserine modification. 3 positions are modified to omega-N-methylarginine: Arg-121, Arg-128, and Arg-130. Residues Arg-131, Arg-133, and Arg-135 each carry the asymmetric dimethylarginine modification. Ser-137 carries the post-translational modification Phosphoserine. 3 stretches are compositionally biased toward basic and acidic residues: residues 148 to 185, 194 to 217, and 227 to 241; these read ISDRKSKEWEERRRQNIEKMNEEMEKIAEYERNQREGV, FLDDPRRRSGPLEESERDRREESR, and DFERVRCGLEHERQG. The stretch at 149 to 185 forms a coiled coil; that stretch reads SDRKSKEWEERRRQNIEKMNEEMEKIAEYERNQREGV. Phosphoserine is present on Ser-202. A phosphoserine mark is found at Ser-248 and Ser-255. Basic and acidic residues-rich tracts occupy residues 258 to 279, 289 to 302, 311 to 320, and 361 to 372; these read GRERSEYLRWKQEREKIDQERL, WRREWDAEKTDGMF, EPSHRYDDQA, and YSDHDDRWETKE. Ser-376, Ser-386, and Ser-390 each carry phosphoserine. Residues 386–395 show a composition bias toward low complexity; sequence SPETSPKETP. Over residues 396–406 the composition is skewed to pro residues; it reads MQPPEIPAPAH. Positions 411-446 are enriched in acidic residues; it reads DEGEENEGEEDEEWEDISEDEEEEEIEVEEGDEEEP. Ser-521 is modified (phosphoserine).

As to quaternary structure, probable component of the exon junction complex (EJC); the association is RNA-dependent.

Probable component of the exon junction complex (EJC), a multiprotein complex that associates immediately upstream of the exon-exon junction on mRNAs and serves as a positional landmark for the intron exon structure of genes and directs post-transcriptional processes in the cytoplasm such as mRNA export, nonsense-mediated mRNA decay (NMD) or translation. In Homo sapiens (Human), this protein is Coiled-coil domain-containing protein 9.